A 248-amino-acid chain; its full sequence is Probable transcriptional regulatory protein PLES_43501 (248 aa).

The protein belongs to the TACO1 family.

Its subcellular location is the cytoplasm. The sequence is that of Probable transcriptional regulatory protein PLES_43501 from Pseudomonas aeruginosa (strain LESB58).